Consider the following 1008-residue polypeptide: MSYDYHQNWGRDGGPRSSGGGYGGGPAGGHGGNRGSGGGGGGGGGGRGGRGRHPGHLKGREIGMWYAKKQGQKNKEAERQERAVVHMDERREEQIVQLLNSVQAKNDKESEAQISWFAPEDHGYGTEVSTKNTPCSENKLDIQEKKLINQEKKMFRIRNRSYIDRDSEYLLQENEPDGTLDQKLLEDLQKKKNDLRYIEMQHFREKLPSYGMQKELVNLIDNHQVTVISGETGCGKTTQVTQFILDNYIERGKGSACRIVCTQPRRISAISVAERVAAERAESCGSGNSTGYQIRLQSRLPRKQGSILYCTTGIILQWLQSDPYLSSVSHIVLDEIHERNLQSDVLMTVVKDLLNFRSDLKVILMSATLNAEKFSEYFGNCPMIHIPGFTFPVVEYLLEDVIEKIRYVPEQKEHRSQFKRGFMQGHVNRQEKEEKEAIYKERWPDYVRELRRRYSASTVDVIEMMEDDKVDLNLIVALIRYIVLEEEDGAILVFLPGWDNISTLHDLLMSQVMFKSDKFLIIPLHSLMPTVNQTQVFKRTPPGVRKIVIATNIAETSITIDDVVYVIDGGKIKETHFDTQNNISTMSAEWVSKANAKQRKGRAGRVQPGHCYHLYNGLRASLLDDYQLPEILRTPLEELCLQIKILRLGGIAYFLSRLMDPPSNEAVLLSIRHLMELNALDKQEELTPLGVHLARLPVEPHIGKMILFGALFCCLDPVLTIAASLSFKDPFVIPLGKEKIADARRKELAKDTRSDHLTVVNAFEGWEEARRRGFRYEKDYCWEYFLSSNTLQMLHNMKGQFAEHLLGAGFVSSRNPKDPESNINSDNEKIIKAVICAGLYPKVAKIRLNLGKKRKMVKVYTKTDGLVAVHPKSVNVEQTDFHYNWLIYHLKMRTSSIYLYDCTEVSPYCLLFFGGDISIQKDNDQETIAVDEWIVFQSPARIAHLVKELRKELDILLQEKIESPHPVDWNDTKSRDCAVLSAIIDLIKTQEKATPRNFPPRFQDGYYS.

Residues 1–51 (MSYDYHQNWGRDGGPRSSGGGYGGGPAGGHGGNRGSGGGGGGGGGGRGGRG) form a required for recruitment to cytoplasmic stress granules region. Positions 1-58 (MSYDYHQNWGRDGGPRSSGGGYGGGPAGGHGGNRGSGGGGGGGGGGRGGRGRHPGHLK) are disordered. The segment at 1–104 (MSYDYHQNWG…IVQLLNSVQA (104 aa)) is required for the pre-miR-134 transport. The tract at residues 1–200 (MSYDYHQNWG…KKNDLRYIEM (200 aa)) is necessary for nuclear and nucleolar caps localizations. Residues 16-48 (RSSGGGYGGGPAGGHGGNRGSGGGGGGGGGGRG) show a composition bias toward gly residues. The interval 53-75 (HPGHLKGREIGMWYAKKQGQKNK) is DSM (DHX36-specific motif). Residues 53–105 (HPGHLKGREIGMWYAKKQGQKNKEAERQERAVVHMDERREEQIVQLLNSVQAK) are required for G4-DNA- and G4-RNA-binding. Residues 72–157 (QKNKEAERQE…INQEKKMFRI (86 aa)) adopt a coiled-coil conformation. RecA-like domain regions lie at residues 106–386 (NDKE…MIHI) and 387–628 (PGFT…DYQL). Serine 161 carries the post-translational modification Phosphoserine. A Helicase ATP-binding domain is found at 217–387 (VNLIDNHQVT…FGNCPMIHIP (171 aa)). 233–238 (GCGKTT) is a binding site for ATP. The necessary for interaction with single-stranded DNA at the 3'-end of the G4-DNA structure stretch occupies residues 265–317 (RRISAISVAERVAAERAESCGSGNSTGYQIRLQSRLPRKQGSILYCTTGIILQ). The DEAH box motif lies at 334–337 (DEIH). Glutamate 335 and histidine 337 together coordinate Mg(2+). Positions 477–647 (ALIRYIVLEE…ELCLQIKILR (171 aa)) constitute a Helicase C-terminal domain. Residues 498 to 557 (WDNISTLHDLLMSQVMFKSDKFLIIPLHSLMPTVNQTQVFKRTPPGVRKIVIATNIAETS) are necessary for interaction with single-stranded DNA at the 3'-end of the G4-DNA structure. The short motif at 517 to 528 (DKFLIIPLHSLM) is the Nuclear localization signal element. Residues serine 557 and 602–605 (RAGR) contribute to the ATP site. The interval 629-698 (PEILRTPLEE…LGVHLARLPV (70 aa)) is WH domain. Necessary for interaction with single-stranded DNA at the 3'-end of the G4-DNA structure regions lie at residues 638–697 (ELCL…ARLP), 849–860 (NLGKKRKMVKVY), and 870–900 (HPKS…IYLY). The tract at residues 841–905 (PKVAKIRLNL…SIYLYDCTEV (65 aa)) is OB-fold-like subdomains. N6-acetyllysine is present on lysine 947. The residue at position 963 (serine 963) is a Phosphoserine.

It belongs to the DEAD box helicase family. DEAH subfamily. As to quaternary structure, found in a multi-helicase-TICAM1 complex at least composed of DHX36, DDX1, DDX21 and TICAM1; this complex exists in resting cells with or without dsRNA poly(I:C) ligand stimulation. Interacts (via C-terminus) with TICAM1 (via TIR domain). Interacts (via C-terminus) with DDX21; this interaction serves as bridges to TICAM1. Interacts with TERT; this interaction is dependent on the ability of DHX36 to bind to the G-quadruplex RNA (G4-RNA) structure present in the telomerase RNA template component (TERC). Interacts with DKC1; this interaction is dependent on the ability of DHX36 to bind to the G4-RNA structure present in TERC. Interacts with PARN; this interaction stimulates PARN to enhance uPA mRNA decay. Interacts with EXOSC3; this interaction occurs in a RNase-insensitive manner. Interacts with EXOSC10; this interaction occurs in a RNase-insensitive manner. Interacts with ILF3; this interaction occurs in a RNA-dependent manner. Interacts with ELAVL1; this interaction occurs in an RNA-dependent manner. Interacts with DDX5; this interaction occurs in a RNA-dependent manner. Interacts with DDX17; this interaction occurs in a RNA-dependent manner. Interacts with HDAC1; this interaction occurs in a RNA-dependent manner. Interacts with HDAC3; this interaction occurs in a RNA-dependent manner. Interacts with HDAC4. Interacts with AGO1. Interacts with AGO2. Interacts with ERCC6. Requires Mg(2+) as cofactor. In terms of tissue distribution, highly expressed in testis.

Its subcellular location is the nucleus. The protein localises to the cytoplasm. The protein resides in the cytosol. It localises to the stress granule. It is found in the nucleus speckle. Its subcellular location is the chromosome. The protein localises to the telomere. The protein resides in the mitochondrion. It localises to the perikaryon. It is found in the cell projection. Its subcellular location is the dendrite. The protein localises to the axon. The enzyme catalyses ATP + H2O = ADP + phosphate + H(+). Its activity is regulated as follows. ATPase activity is enhanced in the presence of homomeric poly(U) RNAs, but not by double-stranded DNA (dsDNA), double-stranded RNA (dsRNA) and tRNA. Its function is as follows. Multifunctional ATP-dependent helicase that unwinds G-quadruplex (G4) structures. Plays a role in many biological processes such as genomic integrity, gene expression regulations and as a sensor to initiate antiviral responses. G4 structures correspond to helical structures containing guanine tetrads. Binds with high affinity to and unwinds G4 structures that are formed in nucleic acids (G4-DNA and G4-RNA). Plays a role in genomic integrity. Converts the G4-RNA structure present in telomerase RNA template component (TREC) into a double-stranded RNA to promote P1 helix formation that acts as a template boundary ensuring accurate reverse transcription. Plays a role in transcriptional regulation. Resolves G4-DNA structures in promoters of genes, such as YY1, KIT/c-kit and ALPL and positively regulates their expression. Plays a role in post-transcriptional regulation. Unwinds a G4-RNA structure located in the 3'-UTR polyadenylation site of the pre-mRNA TP53 and stimulates TP53 pre-mRNA 3'-end processing in response to ultraviolet (UV)-induced DNA damage. Binds to the precursor-microRNA-134 (pre-miR-134) terminal loop and regulates its transport into the synapto-dendritic compartment. Involved in the pre-miR-134-dependent inhibition of target gene expression and the control of dendritic spine size. Plays a role in the regulation of cytoplasmic mRNA translation and mRNA stability. Binds to both G4-RNA structures and alternative non-quadruplex-forming sequence within the 3'-UTR of the PITX1 mRNA regulating negatively PITX1 protein expression. Binds to both G4-RNA structure in the 5'-UTR and AU-rich elements (AREs) localized in the 3'-UTR of NKX2-5 mRNA to either stimulate protein translation or induce mRNA decay in an ELAVL1-dependent manner, respectively. Also binds to ARE sequences present in several mRNAs mediating exosome-mediated 3'-5' mRNA degradation. Involved in cytoplasmic urokinase-type plasminogen activator (uPA) mRNA decay. Component of a multi-helicase-TICAM1 complex that acts as a cytoplasmic sensor of viral double-stranded RNA (dsRNA) and plays a role in the activation of a cascade of antiviral responses including the induction of pro-inflammatory cytokines via the adapter molecule TICAM1. Required for early embryonic development and hematopoiesis. Involved in the regulation of cardioblast differentiation and proliferation during heart development. Involved in spermatogonia differentiation. May play a role in ossification. The sequence is that of ATP-dependent DNA/RNA helicase DHX36 from Homo sapiens (Human).